Here is a 74-residue protein sequence, read N- to C-terminus: MKNSINIQDQFLNQLRKDGTQVTVFLLNGYQLKGYIKGFDNFTVLLEVQGKQQLIYKHAISTFAPEKNVRFETE.

The Sm domain maps to 9 to 69; sequence DQFLNQLRKD…ISTFAPEKNV (61 aa).

This sequence belongs to the Hfq family. In terms of assembly, homohexamer.

RNA chaperone that binds small regulatory RNA (sRNAs) and mRNAs to facilitate mRNA translational regulation in response to envelope stress, environmental stress and changes in metabolite concentrations. Also binds with high specificity to tRNAs. This chain is RNA-binding protein Hfq, found in Geobacillus sp. (strain WCH70).